Here is a 316-residue protein sequence, read N- to C-terminus: Acetyl-coenzyme A carboxylase carboxyl transferase subunit alpha (316 aa).

In terms of domain architecture, CoA carboxyltransferase C-terminal spans 39 to 293; the sequence is RLQDKSESLT…REQLNSQLHM (255 aa).

The protein belongs to the AccA family. Acetyl-CoA carboxylase is a heterohexamer composed of biotin carboxyl carrier protein (AccB), biotin carboxylase (AccC) and two subunits each of ACCase subunit alpha (AccA) and ACCase subunit beta (AccD).

Its subcellular location is the cytoplasm. It catalyses the reaction N(6)-carboxybiotinyl-L-lysyl-[protein] + acetyl-CoA = N(6)-biotinyl-L-lysyl-[protein] + malonyl-CoA. Its pathway is lipid metabolism; malonyl-CoA biosynthesis; malonyl-CoA from acetyl-CoA: step 1/1. Component of the acetyl coenzyme A carboxylase (ACC) complex. First, biotin carboxylase catalyzes the carboxylation of biotin on its carrier protein (BCCP) and then the CO(2) group is transferred by the carboxyltransferase to acetyl-CoA to form malonyl-CoA. The protein is Acetyl-coenzyme A carboxylase carboxyl transferase subunit alpha of Stutzerimonas stutzeri (strain A1501) (Pseudomonas stutzeri).